Consider the following 170-residue polypeptide: Calcineurin subunit B type 2 (170 aa).

The N-myristoyl glycine moiety is linked to residue G2. 4 EF-hand domains span residues 18–46 (DEIK…FMSL), 50–85 (RHNP…FSVK), 87–122 (DEEQ…MVGN), and 128–163 (QLQQ…LEIH). The Ca(2+) site is built by D31, D33, S35, S37, E42, D63, D65, D67, E69, E74, D100, D102, D104, Y106, and E111. The calcineurin A binding stretch occupies residues 131-136 (QLVDKT). Residues D141, D143, D145, K147, and E152 each contribute to the Ca(2+) site.

This sequence belongs to the calcineurin regulatory subunit family. Forms a complex composed of a calmodulin-dependent catalytic subunit (also known as calcineurin A) and a regulatory Ca(2+)-binding subunit (also known as calcineurin B). There are three catalytic subunits, each encoded by a separate gene (PPP3CA, PPP3CB, and PPP3CC) and two regulatory subunits which are also encoded by separate genes (PPP3R1 and PPP3R2). Interacts with SPATA33 (via PQIIIT motif). Testis-specific.

Its subcellular location is the mitochondrion. Regulatory subunit of calcineurin, a calcium-dependent, calmodulin stimulated protein phosphatase. Confers calcium sensitivity. The protein is Calcineurin subunit B type 2 (PPP3R2) of Homo sapiens (Human).